Reading from the N-terminus, the 122-residue chain is MIQQETRLKVADNSGAREVLTIKVLGGSGRKTANIGDVIVCTVKQATPGGVVKKGEVVRAVIVRTKSGARRTDGSYISFDENACVIIRDDKSPRGTRIFGPVARELRENNFMKIVSLAPEVI.

Belongs to the universal ribosomal protein uL14 family. In terms of assembly, part of the 50S ribosomal subunit. Forms a cluster with proteins L3 and L19. In the 70S ribosome, L14 and L19 interact and together make contacts with the 16S rRNA in bridges B5 and B8.

Functionally, binds to 23S rRNA. Forms part of two intersubunit bridges in the 70S ribosome. The polypeptide is Large ribosomal subunit protein uL14 (Bacillus velezensis (strain DSM 23117 / BGSC 10A6 / LMG 26770 / FZB42) (Bacillus amyloliquefaciens subsp. plantarum)).